The chain runs to 296 residues: 4-hydroxybenzoate octaprenyltransferase (296 aa).

8 helical membrane-spanning segments follow: residues 29–49 (IGVYLLLWPTLWAVWIAGKGA), 52–72 (LQTVCIFVLGVFLMRAAGCVI), 102–122 (ALVLFAVLVGLSFVLVLFTNA), 146–166 (YYPQVVLGAAFSWGMPMAFTA), 169–189 (GELPAAAWLLYIANLLWTVGY), 219–239 (VIILTLQGLALGCLMLAGARF), 241–261 (LGACFYIGLLAAAGCFAWEFW), and 275–295 (FLHNHWAGLAIFLGIVADYAV).

It belongs to the UbiA prenyltransferase family. Requires Mg(2+) as cofactor.

The protein localises to the cell inner membrane. The enzyme catalyses all-trans-octaprenyl diphosphate + 4-hydroxybenzoate = 4-hydroxy-3-(all-trans-octaprenyl)benzoate + diphosphate. It functions in the pathway cofactor biosynthesis; ubiquinone biosynthesis. In terms of biological role, catalyzes the prenylation of para-hydroxybenzoate (PHB) with an all-trans polyprenyl group. Mediates the second step in the final reaction sequence of ubiquinone-8 (UQ-8) biosynthesis, which is the condensation of the polyisoprenoid side chain with PHB, generating the first membrane-bound Q intermediate 3-octaprenyl-4-hydroxybenzoate. The sequence is that of 4-hydroxybenzoate octaprenyltransferase from Pseudomonas syringae pv. syringae (strain B728a).